Consider the following 204-residue polypeptide: MSWTCPRCQQPVYFAEKVSSLGKNWHRFCLKCERCHSILSPGGHAEHNGRPYCHKPCYGALFGPRGVNIGGVGCYLYNLPTPPPASRISLSPSNFSPPRPRTGLSRAKKGPPYLKTFTGETSLCPGCGDPVFFAEKVMSLGRNWHRPCLRCQRCRKTLTAGSHAEHDGMPYCHIPCYGYLFGPKGVNIGDVGCYIYDPVDIRSK.

Residues 3–64 (WTCPRCQQPV…KPCYGALFGP (62 aa)) form the LIM zinc-binding 1 domain. The segment at 88-107 (ISLSPSNFSPPRPRTGLSRA) is disordered. In terms of domain architecture, LIM zinc-binding 2 spans 122 to 183 (SLCPGCGDPV…IPCYGYLFGP (62 aa)).

As to expression, expressed specifically by the thymus.

Its subcellular location is the cytoplasm. In Mus musculus (Mouse), this protein is Cysteine-rich protein 3 (Crip3).